The following is a 142-amino-acid chain: Small ribosomal subunit protein uS12 (142 aa).

It belongs to the universal ribosomal protein uS12 family.

This Tetrahymena thermophila protein is Small ribosomal subunit protein uS12.